Reading from the N-terminus, the 215-residue chain is Nucleoredoxin-like protein 1 (215 aa).

The region spanning 1-165 is the Thioredoxin; atypical domain; that stretch reads MADLFLDKIL…VSEIIDRSFL (165 aa). The segment covering 185-194 has biased composition (basic and acidic residues); sequence IKYKDETTNE. The tract at residues 185–215 is disordered; the sequence is IKYKDETTNEKKKRKHCDDEDEGGGGGTEFF.

The protein belongs to the nucleoredoxin family.

It is found in the cell projection. The protein resides in the cilium. Its subcellular location is the photoreceptor outer segment. In terms of biological role, plays an important role in retinal cone photoreceptor survival. May play a role in cone cell viability, slowing down cone degeneration, does not seem to play a role in degenerating rods. The sequence is that of Nucleoredoxin-like protein 1 (nxnl1) from Xenopus laevis (African clawed frog).